The primary structure comprises 309 residues: Protein lifeguard 3 (309 aa).

Disordered regions lie at residues 1–31 (MSNP…QPSV) and 64–84 (PMNY…SFRP). The span at 70–84 (DYNEEERAGSDSFRP) shows a compositional bias: basic and acidic residues. Serine 79 and serine 81 each carry phosphoserine. 7 helical membrane passes run 101–121 (YCII…FTFV), 132–152 (VAVY…LACC), 163–183 (IILL…ISSM), 188–208 (AVII…IFCF), 221–241 (FCVL…VLIF), 244–264 (IYWL…LFLA), and 286–306 (GALQ…QLVG).

This sequence belongs to the BI1 family. LFG subfamily. In terms of tissue distribution, expressed in most tissues except spleen, thymus and testis.

The protein localises to the membrane. Its subcellular location is the lysosome membrane. The protein resides in the endosome membrane. Negatively regulates aortic matrix metalloproteinase-9 (MMP9) production and may play a protective role in vascular remodeling. The chain is Protein lifeguard 3 (Tmbim1) from Mus musculus (Mouse).